A 262-amino-acid chain; its full sequence is tRNA pseudouridine synthase A (262 aa).

Residue Asp51 is the Nucleophile of the active site. Tyr109 lines the substrate pocket.

This sequence belongs to the tRNA pseudouridine synthase TruA family. As to quaternary structure, homodimer.

The enzyme catalyses uridine(38/39/40) in tRNA = pseudouridine(38/39/40) in tRNA. In terms of biological role, formation of pseudouridine at positions 38, 39 and 40 in the anticodon stem and loop of transfer RNAs. The chain is tRNA pseudouridine synthase A from Glaesserella parasuis serovar 5 (strain SH0165) (Haemophilus parasuis).